The primary structure comprises 310 residues: Ribosomal RNA large subunit methyltransferase F (310 aa).

This sequence belongs to the methyltransferase superfamily. METTL16/RlmF family.

It is found in the cytoplasm. It catalyses the reaction adenosine(1618) in 23S rRNA + S-adenosyl-L-methionine = N(6)-methyladenosine(1618) in 23S rRNA + S-adenosyl-L-homocysteine + H(+). Its function is as follows. Specifically methylates the adenine in position 1618 of 23S rRNA. This chain is Ribosomal RNA large subunit methyltransferase F, found in Psychromonas ingrahamii (strain DSM 17664 / CCUG 51855 / 37).